The following is a 255-amino-acid chain: 3-deoxy-manno-octulosonate cytidylyltransferase (255 aa).

The protein belongs to the KdsB family.

It is found in the cytoplasm. It catalyses the reaction 3-deoxy-alpha-D-manno-oct-2-ulosonate + CTP = CMP-3-deoxy-beta-D-manno-octulosonate + diphosphate. The protein operates within nucleotide-sugar biosynthesis; CMP-3-deoxy-D-manno-octulosonate biosynthesis; CMP-3-deoxy-D-manno-octulosonate from 3-deoxy-D-manno-octulosonate and CTP: step 1/1. It participates in bacterial outer membrane biogenesis; lipopolysaccharide biosynthesis. Functionally, activates KDO (a required 8-carbon sugar) for incorporation into bacterial lipopolysaccharide in Gram-negative bacteria. This is 3-deoxy-manno-octulosonate cytidylyltransferase from Cellvibrio japonicus (strain Ueda107) (Pseudomonas fluorescens subsp. cellulosa).